The sequence spans 147 residues: Hemoglobin subunit beta-2 (147 aa).

Val2 is subject to N-acetylvaline. The 145-residue stretch at His3–His147 folds into the Globin domain. Ser13 bears the Phosphoserine mark. Residue Lys18 is modified to N6-succinyllysine. 2 positions are modified to phosphoserine: Ser51 and Ser53. His64 and His93 together coordinate heme b. Position 105 is an asymmetric dimethylarginine (Arg105). Thr124 carries the post-translational modification Phosphothreonine. Cys126 bears the Phosphoserine; in variant Ser-126 mark.

This sequence belongs to the globin family. Heterotetramer of two alpha chains and two beta chains. Red blood cells.

Functionally, involved in oxygen transport from the lung to the various peripheral tissues. In Rattus norvegicus (Rat), this protein is Hemoglobin subunit beta-2.